The primary structure comprises 246 residues: Probable transcriptional regulatory protein HS_0508 (246 aa).

The protein belongs to the TACO1 family.

It localises to the cytoplasm. The polypeptide is Probable transcriptional regulatory protein HS_0508 (Histophilus somni (strain 129Pt) (Haemophilus somnus)).